Here is a 345-residue protein sequence, read N- to C-terminus: Dihydroorotate dehydrogenase (quinone) (345 aa).

FMN is bound by residues 65–69 (AGLDK) and Thr-89. Lys-69 is a substrate binding site. 114–118 (NRMGF) provides a ligand contact to substrate. Asn-142 and Asn-175 together coordinate FMN. A substrate-binding site is contributed by Asn-175. The Nucleophile role is filled by Ser-178. Substrate is bound at residue Asn-180. 2 residues coordinate FMN: Lys-220 and Thr-248. 249 to 250 (NT) contacts substrate. FMN is bound by residues Gly-271, Gly-300, and 321 to 322 (YT).

It belongs to the dihydroorotate dehydrogenase family. Type 2 subfamily. As to quaternary structure, monomer. FMN is required as a cofactor.

The protein localises to the cell membrane. It catalyses the reaction (S)-dihydroorotate + a quinone = orotate + a quinol. It participates in pyrimidine metabolism; UMP biosynthesis via de novo pathway; orotate from (S)-dihydroorotate (quinone route): step 1/1. Functionally, catalyzes the conversion of dihydroorotate to orotate with quinone as electron acceptor. This chain is Dihydroorotate dehydrogenase (quinone), found in Burkholderia ambifaria (strain ATCC BAA-244 / DSM 16087 / CCUG 44356 / LMG 19182 / AMMD) (Burkholderia cepacia (strain AMMD)).